The chain runs to 95 residues: Aspartyl/glutamyl-tRNA(Asn/Gln) amidotransferase subunit C (95 aa).

This sequence belongs to the GatC family. Heterotrimer of A, B and C subunits.

The enzyme catalyses L-glutamyl-tRNA(Gln) + L-glutamine + ATP + H2O = L-glutaminyl-tRNA(Gln) + L-glutamate + ADP + phosphate + H(+). It carries out the reaction L-aspartyl-tRNA(Asn) + L-glutamine + ATP + H2O = L-asparaginyl-tRNA(Asn) + L-glutamate + ADP + phosphate + 2 H(+). Its function is as follows. Allows the formation of correctly charged Asn-tRNA(Asn) or Gln-tRNA(Gln) through the transamidation of misacylated Asp-tRNA(Asn) or Glu-tRNA(Gln) in organisms which lack either or both of asparaginyl-tRNA or glutaminyl-tRNA synthetases. The reaction takes place in the presence of glutamine and ATP through an activated phospho-Asp-tRNA(Asn) or phospho-Glu-tRNA(Gln). The sequence is that of Aspartyl/glutamyl-tRNA(Asn/Gln) amidotransferase subunit C from Prochlorococcus marinus (strain NATL1A).